We begin with the raw amino-acid sequence, 496 residues long: Rhamnulokinase (496 aa).

13-17 (ASSGR) lines the ATP pocket. Substrate-binding positions include Gly-83 and 236 to 238 (HDT). Asp-237 acts as the Proton acceptor in catalysis. Thr-259 contacts ATP. Asn-296 is a substrate binding site. Residue Gln-304 coordinates ATP. Cys-353 and Cys-370 are disulfide-bonded. Gly-402 provides a ligand contact to ATP. Cys-413 and Cys-417 are oxidised to a cystine.

This sequence belongs to the rhamnulokinase family. Mg(2+) serves as cofactor.

The enzyme catalyses L-rhamnulose + ATP = L-rhamnulose 1-phosphate + ADP + H(+). Its pathway is carbohydrate degradation; L-rhamnose degradation; glycerone phosphate from L-rhamnose: step 2/3. Its function is as follows. Involved in the catabolism of L-rhamnose (6-deoxy-L-mannose). Catalyzes the transfer of the gamma-phosphate group from ATP to the 1-hydroxyl group of L-rhamnulose to yield L-rhamnulose 1-phosphate. The chain is Rhamnulokinase from Pectobacterium carotovorum subsp. carotovorum (strain PC1).